We begin with the raw amino-acid sequence, 252 residues long: Vacuolar-sorting protein dot2 (252 aa).

This sequence belongs to the SNF8 family. Component of the endosomal sorting complex required for transport II (ESCRT-II).

It is found in the cytoplasm. It localises to the nucleus. The protein localises to the endosome membrane. In terms of biological role, component of the endosomal sorting complex required for transport II (ESCRT-II), which is required for multivesicular body (MVB) formation and sorting of endosomal cargo proteins into MVBs. The MVB pathway mediates delivery of transmembrane proteins into the lumen of the lysosome for degradation. The ESCRT-II complex is probably involved in the recruitment of the ESCRT-III complex. Negatively regulates meiotic spindle pole body maturation via indirect regulation of the pcp1 gene. Required for efficient entry into pre-meiotic S phase. The sequence is that of Vacuolar-sorting protein dot2 (dot2) from Schizosaccharomyces pombe (strain 972 / ATCC 24843) (Fission yeast).